A 356-amino-acid polypeptide reads, in one-letter code: Nuclear hormone receptor family member nhr-42 (356 aa).

The segment at residues 7 to 82 (SQTCLICGDS…VGMRESAVLS (76 aa)) is a DNA-binding region (nuclear receptor). The segment at 10-30 (CLICGDSADSLHFGALSCRAC) adopts an NR C4-type zinc-finger fold. An NR C4-type; atypical zinc finger spans residues 48–70 (CDRQCKVDTGMRKLCASCRYDKC). The region spanning 108 to 356 (TSDSVLENLQ…HSSIFGNMAE (249 aa)) is the NR LBD domain.

The protein belongs to the nuclear hormone receptor family.

The protein localises to the nucleus. Its function is as follows. Orphan nuclear receptor. This chain is Nuclear hormone receptor family member nhr-42 (nhr-42), found in Caenorhabditis elegans.